The following is a 153-amino-acid chain: 6,7-dimethyl-8-ribityllumazine synthase (153 aa).

5-amino-6-(D-ribitylamino)uracil is bound by residues phenylalanine 22, 56–58, and 80–82; these read AFE and AVI. Residue 85–86 participates in (2S)-2-hydroxy-3-oxobutyl phosphate binding; the sequence is AT. The Proton donor role is filled by histidine 88. Phenylalanine 113 is a binding site for 5-amino-6-(D-ribitylamino)uracil. Arginine 127 serves as a coordination point for (2S)-2-hydroxy-3-oxobutyl phosphate.

It belongs to the DMRL synthase family.

It carries out the reaction (2S)-2-hydroxy-3-oxobutyl phosphate + 5-amino-6-(D-ribitylamino)uracil = 6,7-dimethyl-8-(1-D-ribityl)lumazine + phosphate + 2 H2O + H(+). It functions in the pathway cofactor biosynthesis; riboflavin biosynthesis; riboflavin from 2-hydroxy-3-oxobutyl phosphate and 5-amino-6-(D-ribitylamino)uracil: step 1/2. Functionally, catalyzes the formation of 6,7-dimethyl-8-ribityllumazine by condensation of 5-amino-6-(D-ribitylamino)uracil with 3,4-dihydroxy-2-butanone 4-phosphate. This is the penultimate step in the biosynthesis of riboflavin. The sequence is that of 6,7-dimethyl-8-ribityllumazine synthase from Alkaliphilus metalliredigens (strain QYMF).